Consider the following 397-residue polypeptide: Phosphoglycerate kinase (397 aa).

Residues 21–23 (DFN), Arg36, 59–62 (HLGR), Arg118, and Arg151 each bind substrate. Residues Lys202, Gly293, Glu324, and 353–356 (GGDS) contribute to the ATP site.

It belongs to the phosphoglycerate kinase family. Monomer.

The protein localises to the cytoplasm. It carries out the reaction (2R)-3-phosphoglycerate + ATP = (2R)-3-phospho-glyceroyl phosphate + ADP. It functions in the pathway carbohydrate degradation; glycolysis; pyruvate from D-glyceraldehyde 3-phosphate: step 2/5. The sequence is that of Phosphoglycerate kinase from Chloroherpeton thalassium (strain ATCC 35110 / GB-78).